Here is a 368-residue protein sequence, read N- to C-terminus: Proton-coupled zinc antiporter SLC30A8 (368 aa).

Topologically, residues 1–78 (MEFLERTYLV…AKWRLCAASA (78 aa)) are cytoplasmic. Residues H51, C52, and H53 each contribute to the Zn(2+) site. An HCH Motif; seals regulatory zinc-binding pocket motif is present at residues 51-53 (HCH). Residues 79–99 (ICFFFMVAEVVGGHVAGSLAV) form a helical membrane-spanning segment. The Lumenal, vesicle segment spans residues 100–102 (LTD). The helical transmembrane segment at 103–123 (AAHLLIDLTSFLLSLFSLWLS) threads the bilayer. Positions 105 and 109 each coordinate Zn(2+). Residues 124–139 (SRPPSKRLTFGWYRAE) lie on the Cytoplasmic side of the membrane. Residues 140-160 (ILGALLSVLCIWVVTGVLVYL) traverse the membrane as a helical segment. Over 161–174 (ACERLLYPDYQIQA) the chain is Lumenal, vesicle. The helical transmembrane segment at 175 to 195 (GIMITVSGCAVAANIVLTLIL) threads the bilayer. Residues 196–216 (HQRHLGHNHKDAQANASVRAA) lie on the Cytoplasmic side of the membrane. Residues 217–237 (FVHALGDVFQSTSVLISALII) form a helical membrane-spanning segment. Positions 219 and 223 each coordinate Zn(2+). The Lumenal, vesicle segment spans residues 238-245 (YFKPDYKM). Residues 246–266 (ADPVCTFISSVLALASTVMIL) form a helical membrane-spanning segment. Residues 267–368 (KDFSILLMEG…SCLLCEDPQD (102 aa)) lie on the Cytoplasmic side of the membrane. Zn(2+) contacts are provided by H300, H317, H344, E351, C360, and C363.

Belongs to the cation diffusion facilitator (CDF) transporter (TC 2.A.4) family. SLC30A subfamily. Homodimer. In terms of tissue distribution, expressed in endocrine pancreatic islet alpha and beta cells. May be more abundant in beta cells than in alpha cells. Expressed in cubical epithelium lining thyroid follicles (at protein level). In the adrenal gland, detected in the cortex, but not in the medulla (at protein level).

It localises to the cytoplasmic vesicle. The protein localises to the secretory vesicle membrane. The protein resides in the cell membrane. The enzyme catalyses Zn(2+)(in) + 2 H(+)(out) = Zn(2+)(out) + 2 H(+)(in). Functionally, proton-coupled zinc ion antiporter mediating the entry of zinc into the lumen of pancreatic beta cell secretory granules, thereby regulating insulin secretion. This chain is Proton-coupled zinc antiporter SLC30A8, found in Rattus norvegicus (Rat).